The chain runs to 479 residues: V-type ATP synthase beta chain (479 aa).

The tract at residues 458–479 (EGDSEREAPKMDSPHEEISEKS) is disordered.

Belongs to the ATPase alpha/beta chains family.

In terms of biological role, produces ATP from ADP in the presence of a proton gradient across the membrane. The V-type beta chain is a regulatory subunit. The protein is V-type ATP synthase beta chain of Nitrosococcus oceani (strain ATCC 19707 / BCRC 17464 / JCM 30415 / NCIMB 11848 / C-107).